Here is a 309-residue protein sequence, read N- to C-terminus: MDKIVIASRESRLAMWQAEHIQARLQALYPHLTVEILGMTTQGDQILDKTLSKIGGKGLFVKELEQALMDGRADLAVHSLKDVPMTLPDGFALAAVCEREDPRDAFVSNRYQHLSELPAGSVVGTSSLRREAQLRARFPQLAVKPLRGNVQTRLKKLDDGEFDAIILAAAGLKRLGLAERIQGELAPSESLPAAGQGALGIEIRADRADLSALLAPLNHPDTRACTAAERALAKELGGSCQVPLGAFATLADGTLTLGGLVAHPDGSVVLTASASGPADYADALGRAVAKKLIDAGARPLIAAVLAEPR.

S-(dipyrrolylmethanemethyl)cysteine is present on C240.

It belongs to the HMBS family. In terms of assembly, monomer. Dipyrromethane is required as a cofactor.

It carries out the reaction 4 porphobilinogen + H2O = hydroxymethylbilane + 4 NH4(+). Its pathway is porphyrin-containing compound metabolism; protoporphyrin-IX biosynthesis; coproporphyrinogen-III from 5-aminolevulinate: step 2/4. In terms of biological role, tetrapolymerization of the monopyrrole PBG into the hydroxymethylbilane pre-uroporphyrinogen in several discrete steps. In Chromobacterium violaceum (strain ATCC 12472 / DSM 30191 / JCM 1249 / CCUG 213 / NBRC 12614 / NCIMB 9131 / NCTC 9757 / MK), this protein is Porphobilinogen deaminase.